The chain runs to 455 residues: La-related protein 6C (455 aa).

The segment covering 1–20 (MAQMQREEVESVTTEKKRLD) has biased composition (basic and acidic residues). Residues 1–29 (MAQMQREEVESVTTEKKRLDGGGGSSGAQ) are disordered. The 92-residue stretch at 138–229 (NLLSDDLRLK…KRTSQFTDRD (92 aa)) folds into the HTH La-type RNA-binding domain. Residues 236–324 (RTVVAENLPD…KGLRVRLLLR (89 aa)) enclose the RRM domain. 2 disordered regions span residues 348–396 (SYES…YAVG) and 414–455 (SLGS…PNNL).

It is found in the nucleus. In terms of biological role, transcriptional regulator. The sequence is that of La-related protein 6C (LARP6C) from Arabidopsis thaliana (Mouse-ear cress).